Reading from the N-terminus, the 89-residue chain is DNA-directed RNA polymerase subunit Rpo6 (89 aa).

It belongs to the archaeal Rpo6/eukaryotic RPB6 RNA polymerase subunit family. As to quaternary structure, part of the RNA polymerase complex.

Its subcellular location is the cytoplasm. The catalysed reaction is RNA(n) + a ribonucleoside 5'-triphosphate = RNA(n+1) + diphosphate. DNA-dependent RNA polymerase (RNAP) catalyzes the transcription of DNA into RNA using the four ribonucleoside triphosphates as substrates. This Aeropyrum pernix (strain ATCC 700893 / DSM 11879 / JCM 9820 / NBRC 100138 / K1) protein is DNA-directed RNA polymerase subunit Rpo6.